We begin with the raw amino-acid sequence, 68 residues long: uncharacterized protein (68 aa).

Residues 24–44 traverse the membrane as a helical segment; it reads AHICKCIAMFFVVAGVVLMFF.

The protein localises to the endoplasmic reticulum. Its subcellular location is the membrane. This is an uncharacterized protein from Saccharomyces cerevisiae (strain ATCC 204508 / S288c) (Baker's yeast).